We begin with the raw amino-acid sequence, 105 residues long: Pyrimidine/purine nucleoside phosphorylase (105 aa).

The protein belongs to the nucleoside phosphorylase PpnP family.

The catalysed reaction is a purine D-ribonucleoside + phosphate = a purine nucleobase + alpha-D-ribose 1-phosphate. It catalyses the reaction adenosine + phosphate = alpha-D-ribose 1-phosphate + adenine. The enzyme catalyses cytidine + phosphate = cytosine + alpha-D-ribose 1-phosphate. It carries out the reaction guanosine + phosphate = alpha-D-ribose 1-phosphate + guanine. The catalysed reaction is inosine + phosphate = alpha-D-ribose 1-phosphate + hypoxanthine. It catalyses the reaction thymidine + phosphate = 2-deoxy-alpha-D-ribose 1-phosphate + thymine. The enzyme catalyses uridine + phosphate = alpha-D-ribose 1-phosphate + uracil. It carries out the reaction xanthosine + phosphate = alpha-D-ribose 1-phosphate + xanthine. Catalyzes the phosphorolysis of diverse nucleosides, yielding D-ribose 1-phosphate and the respective free bases. Can use uridine, adenosine, guanosine, cytidine, thymidine, inosine and xanthosine as substrates. Also catalyzes the reverse reactions. In Ralstonia nicotianae (strain ATCC BAA-1114 / GMI1000) (Ralstonia solanacearum), this protein is Pyrimidine/purine nucleoside phosphorylase.